Here is a 231-residue protein sequence, read N- to C-terminus: ATP phosphoribosyltransferase (231 aa).

The protein belongs to the ATP phosphoribosyltransferase family. Short subfamily. Heteromultimer composed of HisG and HisZ subunits.

The protein resides in the cytoplasm. The enzyme catalyses 1-(5-phospho-beta-D-ribosyl)-ATP + diphosphate = 5-phospho-alpha-D-ribose 1-diphosphate + ATP. Its pathway is amino-acid biosynthesis; L-histidine biosynthesis; L-histidine from 5-phospho-alpha-D-ribose 1-diphosphate: step 1/9. In terms of biological role, catalyzes the condensation of ATP and 5-phosphoribose 1-diphosphate to form N'-(5'-phosphoribosyl)-ATP (PR-ATP). Has a crucial role in the pathway because the rate of histidine biosynthesis seems to be controlled primarily by regulation of HisG enzymatic activity. This chain is ATP phosphoribosyltransferase, found in Brucella suis (strain ATCC 23445 / NCTC 10510).